The primary structure comprises 1026 residues: Multidrug resistance protein MdtC (1026 aa).

Residues 1 to 6 (MRFFAL) lie on the Cytoplasmic side of the membrane. Residues 7–29 (FIYRPVATILIAAAITLCGILGF) form a helical membrane-spanning segment. At 30-335 (RLLPVAPLPQ…TIRASLQEVE (306 aa)) the chain is on the periplasmic side. A helical membrane pass occupies residues 336-353 (ETLAISVALVILVVFLFL). Residues 354 to 359 (RSGRAT) lie on the Cytoplasmic side of the membrane. A helical membrane pass occupies residues 360-379 (LIPAVAVPVSLIGTFAAMYL). Over 380–388 (CGFSLNNLS) the chain is Periplasmic. Residues 389–411 (LMALTIATGFVVDDAIVVLENIA) traverse the membrane as a helical segment. Over 412–430 (RHLEAGMKPLQAALQGTRE) the chain is Cytoplasmic. The chain crosses the membrane as a helical span at residues 431–453 (VGFTVISMSLSLVAVFLPLLLMG). The Periplasmic segment spans residues 454–467 (GLPGRLLREFAVTL). The helical transmembrane segment at 468 to 490 (SVAIGISLVVSLTLTPMMCGWML) threads the bilayer. Topologically, residues 491–852 (KSSKPRTQPR…QVFQQTMNSQ (362 aa)) are cytoplasmic. The chain crosses the membrane as a helical span at residues 853 to 875 (LILIVAAIATVYIVLGILYESYV). Topologically, residues 876-894 (HPLTILSTLPSAGVGALLA) are periplasmic. The chain crosses the membrane as a helical span at residues 895 to 917 (LELFNAPFSLIALIGIMLLIGIV). Residues 918 to 947 (KKNAIMMVDFALEAQRSGGLTPEQAIFQAC) lie on the Cytoplasmic side of the membrane. Residues 948–970 (LLRFRPIMMTTLAALFGALPLVL) form a helical membrane-spanning segment. Over 971 to 984 (SGGDGSELRQPLGI) the chain is Periplasmic. A helical membrane pass occupies residues 985–1007 (TIVGGLVMSQLLTLYTTPVVYLF). The Cytoplasmic portion of the chain corresponds to 1008 to 1026 (FDRLRLRFSRKNSKPVVEI).

It belongs to the resistance-nodulation-cell division (RND) (TC 2.A.6) family. MdtC subfamily. In terms of assembly, part of a tripartite efflux system composed of MdtA, MdtB and MdtC. MdtC forms a heteromultimer with MdtB.

The protein resides in the cell inner membrane. The chain is Multidrug resistance protein MdtC from Salmonella typhimurium (strain LT2 / SGSC1412 / ATCC 700720).